The chain runs to 609 residues: MDFLRQCTLIQVMILAITIRLTHGGWTNFPESCVQLQPENAYDEMCDDSSLTNSNSIEYHNKLKSTKKFCILNQIKSVKTNLYRCYNISITSVCNSELSSQNLHQDYEVNPISRRDCLKHIIKNWNDENLERSLIQKSEDIYRTRCNFLKNTETKIEDYIIYQEKTESSVINADGLDSMIETKLIELESNKKLDNTVKTCISWEQGGDSRFNTLNLIALDLNLCLAKNSYKLEKCLLCYFFIGQDKWYRGEDGFMISIELSELDTKSIPKCEILWYRLYPGNLLTINQDYLAKKVQERNRGCNAVKSILRSGKAPPLENMIKYTIPLQAGYGIGFREKIEKTVYSAPLRGNLVERRNYDFFRCHYFPSKIKIVENKTHTPPINLCVYHFGKGSCHYPDNKYFISMNPVSFEENQHYPKSGQSFDYQSGLNGIRKKIKNQEYYIPDSFLMTLIYSSHTKSILEKTNITEVFRNDSNYENHTLQDYLGLFNKEDEGMRPERDLINLPNITSETEDDDTSDLNLELNKNLINKTSSGFSNDNSNVINIPSKEYNKTDIKTVGKINKTSIIINHEEKDYWHEEYNMWGLSGLSFLLLLALFYNKIKRKIKRKS.

The signal sequence occupies residues 1–24 (MDFLRQCTLIQVMILAITIRLTHG). The Extracellular portion of the chain corresponds to 25–581 (GWTNFPESCV…EKDYWHEEYN (557 aa)). N-linked (GlcNAc...) asparagine; by host glycosylation is found at Asn-87, Asn-375, Asn-465, Asn-472, Asn-478, Asn-506, Asn-529, Asn-551, and Asn-562. The helical transmembrane segment at 582–599 (MWGLSGLSFLLLLALFYN) threads the bilayer. Topologically, residues 600–609 (KIKRKIKRKS) are cytoplasmic.

The protein belongs to the ephemerovirus glycoprotein family.

The protein resides in the membrane. The sequence is that of Non-structural glycoprotein (GNS) from Adelaide River virus (ARV).